A 299-amino-acid polypeptide reads, in one-letter code: Pyridoxal 5'-phosphate synthase subunit PdxS (299 aa).

Asp24 is a D-ribose 5-phosphate binding site. Lys81 acts as the Schiff-base intermediate with D-ribose 5-phosphate in catalysis. A D-ribose 5-phosphate-binding site is contributed by Gly153. Residue Arg165 coordinates D-glyceraldehyde 3-phosphate. Residues Gly219 and 240–241 (GS) each bind D-ribose 5-phosphate.

Belongs to the PdxS/SNZ family. In terms of assembly, in the presence of PdxT, forms a dodecamer of heterodimers.

The enzyme catalyses aldehydo-D-ribose 5-phosphate + D-glyceraldehyde 3-phosphate + L-glutamine = pyridoxal 5'-phosphate + L-glutamate + phosphate + 3 H2O + H(+). It functions in the pathway cofactor biosynthesis; pyridoxal 5'-phosphate biosynthesis. Catalyzes the formation of pyridoxal 5'-phosphate from ribose 5-phosphate (RBP), glyceraldehyde 3-phosphate (G3P) and ammonia. The ammonia is provided by the PdxT subunit. Can also use ribulose 5-phosphate and dihydroxyacetone phosphate as substrates, resulting from enzyme-catalyzed isomerization of RBP and G3P, respectively. The polypeptide is Pyridoxal 5'-phosphate synthase subunit PdxS (Methanococcus vannielii (strain ATCC 35089 / DSM 1224 / JCM 13029 / OCM 148 / SB)).